A 113-amino-acid polypeptide reads, in one-letter code: 4-cresol dehydrogenase [hydroxylating] cytochrome c subunit (113 aa).

An N-terminal signal peptide occupies residues 1–33; sequence MTFPFSGAAVKRMLVTGVVLPFGLLVAAGQAQA. Residues Cys-48, Cys-51, His-52, and Met-83 each coordinate heme c.

Tetramer of two cytochrome subunits and two flavoprotein subunits. In terms of processing, binds 1 heme c group covalently per subunit.

It functions in the pathway aromatic compound metabolism; p-cresol degradation. Functionally, this is the heme-containing component of the p-cresol methylhydroxylase. It accepts electrons from the flavoprotein subunit. This chain is 4-cresol dehydrogenase [hydroxylating] cytochrome c subunit (pchC), found in Pseudomonas putida (Arthrobacter siderocapsulatus).